The chain runs to 78 residues: MVKLRLKRYGKKQQPTYRIVAIESSFRREGRAFKEVGIYIPKYNKTQLNVPAIIELLKNGAQPTSTVKNILLRAQIVV.

It belongs to the bacterial ribosomal protein bS16 family.

It localises to the plastid. Its subcellular location is the chloroplast. This is Small ribosomal subunit protein bS16c from Chara vulgaris (Common stonewort).